Consider the following 374-residue polypeptide: Probable neutral protease 2 homolog ARB_00849 (374 aa).

Residues 1–19 form the signal peptide; it reads MKFLTALSAIGALVATATA. Positions 20–189 are excised as a propeptide; it reads AAVPNTPAKQ…KKSRGTIDKR (170 aa). 2 disulfide bridges follow: Cys197–Cys268 and Cys275–Cys293. Position 318 (His318) interacts with Zn(2+). Glu319 is an active-site residue. Residues His322 and Asp333 each coordinate Zn(2+).

Belongs to the peptidase M35 family. Zn(2+) serves as cofactor.

The protein resides in the secreted. It catalyses the reaction Preferential cleavage of bonds with hydrophobic residues in P1'. Also 3-Asn-|-Gln-4 and 8-Gly-|-Ser-9 bonds in insulin B chain.. Its function is as follows. Probable secreted metalloprotease that shows high activities on basic nuclear substrates such as histone and protamine. May be involved in virulence. This chain is Probable neutral protease 2 homolog ARB_00849, found in Arthroderma benhamiae (strain ATCC MYA-4681 / CBS 112371) (Trichophyton mentagrophytes).